We begin with the raw amino-acid sequence, 320 residues long: L-lactate dehydrogenase (320 aa).

Residues Val18, Asp39, Arg44, Tyr69, and 83–84 (GA) contribute to the NAD(+) site. Substrate contacts are provided by Gln86 and Arg92. NAD(+) contacts are provided by residues Ser105, 122–124 (AAN), and Ser147. 124 to 127 (NPVD) contributes to the substrate binding site. 152-155 (DSSR) serves as a coordination point for substrate. The Proton acceptor role is filled by His179. Tyr223 carries the phosphotyrosine modification. Thr232 provides a ligand contact to substrate.

This sequence belongs to the LDH/MDH superfamily. LDH family. Homotetramer.

It localises to the cytoplasm. It catalyses the reaction (S)-lactate + NAD(+) = pyruvate + NADH + H(+). It participates in fermentation; pyruvate fermentation to lactate; (S)-lactate from pyruvate: step 1/1. The quaternary structure is constitutionally similar to the active conformation of allosteric LDHs, and the regulation is independent of the fructose 1,6-bisphosphate-binding site. Its function is as follows. Catalyzes the conversion of lactate to pyruvate. This chain is L-lactate dehydrogenase, found in Lactiplantibacillus pentosus (Lactobacillus pentosus).